We begin with the raw amino-acid sequence, 333 residues long: Photosystem II assembly lipoprotein Ycf48 (333 aa).

The signal sequence occupies residues 1 to 23 (MTRFVSSAINLLLVLVLGVSLSG). The N-palmitoyl cysteine moiety is linked to residue C24. The S-diacylglycerol cysteine moiety is linked to residue C24.

Belongs to the Ycf48 family. As to quaternary structure, part of early PSII assembly complexes which includes D1 (psbA) and PsbI; not found in mature PSII. Binds to the lumenal side of PSII complexes. Interacts with YidC.

Its subcellular location is the cellular thylakoid membrane. In terms of biological role, a factor required for optimal assembly of photosystem II (PSII), acting in the early stages of PSII assembly. Also plays a role in replacement of photodamaged D1 (psbA). Assists YidC in synthesis of chlorophyll-binding proteins. The chain is Photosystem II assembly lipoprotein Ycf48 from Parasynechococcus marenigrum (strain WH8102).